The primary structure comprises 560 residues: Putative transport protein VFMJ11_0927 (560 aa).

5 helical membrane passes run 8–28, 37–57, 66–86, 94–114, and 161–181; these read LLSQ…LFIA, LGSS…GYTF, FMLF…GIFL, LLVL…GHYF, and NLSV…ILLA. 2 consecutive RCK C-terminal domains span residues 203–292 and 293–376; these read RGIG…FRNG and KEVF…KIGF. 5 helical membrane-spanning segments follow: residues 386 to 406, 409 to 429, 451 to 471, 478 to 498, and 539 to 559; these read LLAF…TMSF, VTFG…LGFL, GLLV…NEYF, VLAA…LVGA, and AGTY…MILL.

Belongs to the AAE transporter (TC 2.A.81) family. YbjL subfamily.

It localises to the cell membrane. The chain is Putative transport protein VFMJ11_0927 from Aliivibrio fischeri (strain MJ11) (Vibrio fischeri).